Here is a 285-residue protein sequence, read N- to C-terminus: Protease HtpX homolog (285 aa).

2 helical membrane passes run 7 to 27 (TAML…MIGG) and 30 to 50 (GMTI…WFSD). His131 is a binding site for Zn(2+). The active site involves Glu132. His135 is a binding site for Zn(2+). A run of 2 helical transmembrane segments spans residues 146-166 (ISAT…FFGG) and 177-197 (IAGI…QMAI). Position 202 (Glu202) interacts with Zn(2+).

The protein belongs to the peptidase M48B family. The cofactor is Zn(2+).

It localises to the cell inner membrane. The sequence is that of Protease HtpX homolog from Burkholderia mallei (strain NCTC 10247).